A 754-amino-acid polypeptide reads, in one-letter code: 1,4-alpha-glucan branching enzyme GlgB (754 aa).

Asp431 serves as the catalytic Nucleophile. Residue Glu484 is the Proton donor of the active site.

Belongs to the glycosyl hydrolase 13 family. GlgB subfamily. In terms of assembly, monomer.

The catalysed reaction is Transfers a segment of a (1-&gt;4)-alpha-D-glucan chain to a primary hydroxy group in a similar glucan chain.. It functions in the pathway glycan biosynthesis; glycogen biosynthesis. Its function is as follows. Catalyzes the formation of the alpha-1,6-glucosidic linkages in glycogen by scission of a 1,4-alpha-linked oligosaccharide from growing alpha-1,4-glucan chains and the subsequent attachment of the oligosaccharide to the alpha-1,6 position. In Prochlorococcus marinus (strain AS9601), this protein is 1,4-alpha-glucan branching enzyme GlgB.